The primary structure comprises 92 residues: Phenol 2-monooxygenase, auxiliary component DmpK (92 aa).

Homotrimer or homotetramer. Interacts with the phenol hydroxylase components DmpL (P1 component) and DmpN (P3 component).

It participates in aromatic compound metabolism; phenol degradation. Functionally, dmpK is an auxiliary protein associated with the multicomponent phenol hydroxylase DmpLMNOP and it may be involved in the post-translational incorporation of iron into the oxygenase component of the phenol hydroxylase. Required for growth on phenol but not for in vitro phenol hydroxylase activity. The protein is Phenol 2-monooxygenase, auxiliary component DmpK of Pseudomonas sp. (strain CF600).